The sequence spans 75 residues: MARFFRRRKFCRFTAEGVTEIDYKDIATLKNYITESGKIVPSRITGTSAKYQRQLSSAIKRARFLALLPYTDSHK.

This sequence belongs to the bacterial ribosomal protein bS18 family. As to quaternary structure, part of the 30S ribosomal subunit. Forms a tight heterodimer with protein bS6.

Binds as a heterodimer with protein bS6 to the central domain of the 16S rRNA, where it helps stabilize the platform of the 30S subunit. The sequence is that of Small ribosomal subunit protein bS18 from Alteromonas mediterranea (strain DSM 17117 / CIP 110805 / LMG 28347 / Deep ecotype).